A 197-amino-acid chain; its full sequence is Segregation and condensation protein B (197 aa).

Belongs to the ScpB family. In terms of assembly, homodimer. Homodimerization may be required to stabilize the binding of ScpA to the Smc head domains. Component of a cohesin-like complex composed of ScpA, ScpB and the Smc homodimer, in which ScpA and ScpB bind to the head domain of Smc. The presence of the three proteins is required for the association of the complex with DNA.

Its subcellular location is the cytoplasm. Its function is as follows. Participates in chromosomal partition during cell division. May act via the formation of a condensin-like complex containing Smc and ScpA that pull DNA away from mid-cell into both cell halves. This is Segregation and condensation protein B from Syntrophotalea carbinolica (strain DSM 2380 / NBRC 103641 / GraBd1) (Pelobacter carbinolicus).